Reading from the N-terminus, the 679-residue chain is Penicillin-binding protein PbpB (679 aa).

The interval 1–74 (MSRAAPRRAS…STRARRTRQV (74 aa)) is disordered. Topologically, residues 1 to 90 (MSRAAPRRAS…GASFVFRHRT (90 aa)) are cytoplasmic. Polar residues predominate over residues 42-54 (ARQAQEATKSRPA). A helical transmembrane segment spans residues 91-111 (GNAVILVLMLVAATQLFFLQV). Topologically, residues 112-679 (SHAAGLRAQA…PGPPLVLQAT (568 aa)) are extracellular. The Acyl-ester intermediate role is filled by Ser-386.

The protein belongs to the transpeptidase family. As to quaternary structure, interacts with Wag31. Cleaved by Rip1 in response to oxidative stress (H(2)O(2)), prevented by Wag31. Cleavage probably occurs near residues 102-103.

The protein resides in the cell membrane. It functions in the pathway cell wall biogenesis; peptidoglycan biosynthesis. Functionally, synthesis of cross-linked peptidoglycan from the lipid intermediates. This chain is Penicillin-binding protein PbpB (pbpB), found in Mycobacterium tuberculosis (strain ATCC 25618 / H37Rv).